The following is a 474-amino-acid chain: Coiled-coil domain-containing protein 6 (474 aa).

The span at 1–10 shows a compositional bias: acidic residues; that stretch reads MADSASESDT. A disordered region spans residues 1–47; that stretch reads MADSASESDTDGAGGNSSSSAAMQSSCSSTSGGGGGGGGGGGGGKSG. Ala2 bears the N-acetylalanine mark. Positions 16–30 are enriched in low complexity; it reads NSSSSAAMQSSCSST. Residues 31–47 show a composition bias toward gly residues; the sequence is SGGGGGGGGGGGGGKSG. The residue at position 52 (Ser52) is a Phosphoserine. A coiled-coil region spans residues 53-237; that stretch reads PFRLEELTNR…KRILQEKLDQ (185 aa). 3 repeat units span residues 106 to 134, 135 to 163, and 164 to 192. Positions 106-235 are 5 X 29 AA tandem repeats; sequence EQEEEFISNT…AEKRILQEKL (130 aa). The 4; approximate repeat unit spans residues 193 to 206; it reads EQLRREKIDLENTL. Residues 207-235 form repeat 5; it reads EQEQEALVNRLWKRMDKLEAEKRILQEKL. Phosphoserine occurs at positions 240, 244, 249, 254, 284, and 323. Positions 253–332 form a coiled coil; the sequence is DSPENMMRHI…SESESSLEMD (80 aa). A disordered region spans residues 342 to 369; that stretch reads AQGLRPRTVSSPIPYTPSPSSSRPISPG. At Thr349 the chain carries Phosphothreonine. Residues 351–368 are compositionally biased toward low complexity; it reads SSPIPYTPSPSSSRPISP. 2 positions are modified to phosphoserine: Ser363 and Ser367. Arg387 bears the Omega-N-methylarginine mark. A phosphoserine mark is found at Ser395 and Ser413. The interval 397 to 474 is disordered; the sequence is GLHVQHMGTS…QHSAHPSSQP (78 aa). The segment covering 426-451 has biased composition (pro residues); the sequence is PTPPPSPNTQTPVQPPPPPPPPPMQP. The SH3-binding signature appears at 442-451; the sequence is PPPPPPPMQP. Over residues 459-474 the composition is skewed to low complexity; the sequence is SQPTPSQHSAHPSSQP.

In terms of tissue distribution, ubiquitously expressed.

It localises to the cytoplasm. Its subcellular location is the cytoskeleton. In Homo sapiens (Human), this protein is Coiled-coil domain-containing protein 6 (CCDC6).